Here is a 132-residue protein sequence, read N- to C-terminus: Small ribosomal subunit protein uS8 (132 aa).

This sequence belongs to the universal ribosomal protein uS8 family. In terms of assembly, part of the 30S ribosomal subunit. Contacts proteins S5 and S12.

Its function is as follows. One of the primary rRNA binding proteins, it binds directly to 16S rRNA central domain where it helps coordinate assembly of the platform of the 30S subunit. The sequence is that of Small ribosomal subunit protein uS8 from Sinorhizobium medicae (strain WSM419) (Ensifer medicae).